Consider the following 241-residue polypeptide: Sugar fermentation stimulation protein homolog (241 aa).

The protein belongs to the SfsA family.

The sequence is that of Sugar fermentation stimulation protein homolog from Halorhodospira halophila (strain DSM 244 / SL1) (Ectothiorhodospira halophila (strain DSM 244 / SL1)).